The chain runs to 187 residues: Orotate phosphoribosyltransferase (187 aa).

5-phospho-alpha-D-ribose 1-diphosphate contacts are provided by residues Arg-98, Lys-99, Lys-102, His-104, and 128 to 136 (EDVTTTGGS). Residues Thr-132 and Arg-160 each contribute to the orotate site.

This sequence belongs to the purine/pyrimidine phosphoribosyltransferase family. PyrE subfamily. As to quaternary structure, homodimer. Mg(2+) is required as a cofactor.

It carries out the reaction orotidine 5'-phosphate + diphosphate = orotate + 5-phospho-alpha-D-ribose 1-diphosphate. The protein operates within pyrimidine metabolism; UMP biosynthesis via de novo pathway; UMP from orotate: step 1/2. Catalyzes the transfer of a ribosyl phosphate group from 5-phosphoribose 1-diphosphate to orotate, leading to the formation of orotidine monophosphate (OMP). This Bradyrhizobium diazoefficiens (strain JCM 10833 / BCRC 13528 / IAM 13628 / NBRC 14792 / USDA 110) protein is Orotate phosphoribosyltransferase.